The chain runs to 675 residues: tRNA 5-methylaminomethyl-2-thiouridine biosynthesis bifunctional protein MnmC (675 aa).

The tRNA (mnm(5)s(2)U34)-methyltransferase stretch occupies residues 1 to 245; sequence MANLPIQHAS…KREMLSGLLP (245 aa). Residues 271–675 are FAD-dependent cmnm(5)s(2)U34 oxidoreductase; it reads IGGGIASVLT…LLKGKPVTHD (405 aa).

The protein in the N-terminal section; belongs to the methyltransferase superfamily. tRNA (mnm(5)s(2)U34)-methyltransferase family. It in the C-terminal section; belongs to the DAO family. Requires FAD as cofactor.

It localises to the cytoplasm. It catalyses the reaction 5-aminomethyl-2-thiouridine(34) in tRNA + S-adenosyl-L-methionine = 5-methylaminomethyl-2-thiouridine(34) in tRNA + S-adenosyl-L-homocysteine + H(+). Functionally, catalyzes the last two steps in the biosynthesis of 5-methylaminomethyl-2-thiouridine (mnm(5)s(2)U) at the wobble position (U34) in tRNA. Catalyzes the FAD-dependent demodification of cmnm(5)s(2)U34 to nm(5)s(2)U34, followed by the transfer of a methyl group from S-adenosyl-L-methionine to nm(5)s(2)U34, to form mnm(5)s(2)U34. This is tRNA 5-methylaminomethyl-2-thiouridine biosynthesis bifunctional protein MnmC from Pectobacterium atrosepticum (strain SCRI 1043 / ATCC BAA-672) (Erwinia carotovora subsp. atroseptica).